The sequence spans 256 residues: Triosephosphate isomerase (256 aa).

Residue 12 to 14 coordinates substrate; that stretch reads NWK. Histidine 99 functions as the Electrophile in the catalytic mechanism. Glutamate 169 serves as the catalytic Proton acceptor. Substrate is bound by residues glycine 175, serine 214, and 235-236; that span reads GG.

Belongs to the triosephosphate isomerase family. As to quaternary structure, homodimer.

Its subcellular location is the cytoplasm. It catalyses the reaction D-glyceraldehyde 3-phosphate = dihydroxyacetone phosphate. It functions in the pathway carbohydrate biosynthesis; gluconeogenesis. It participates in carbohydrate degradation; glycolysis; D-glyceraldehyde 3-phosphate from glycerone phosphate: step 1/1. Its function is as follows. Involved in the gluconeogenesis. Catalyzes stereospecifically the conversion of dihydroxyacetone phosphate (DHAP) to D-glyceraldehyde-3-phosphate (G3P). The chain is Triosephosphate isomerase from Mesorhizobium japonicum (strain LMG 29417 / CECT 9101 / MAFF 303099) (Mesorhizobium loti (strain MAFF 303099)).